A 116-amino-acid chain; its full sequence is Aspartate 1-decarboxylase (116 aa).

The active-site Schiff-base intermediate with substrate; via pyruvic acid is Ser-25. Ser-25 is modified (pyruvic acid (Ser)). Thr-57 contacts substrate. Tyr-58 (proton donor) is an active-site residue. 73-75 is a binding site for substrate; it reads GAA.

This sequence belongs to the PanD family. As to quaternary structure, heterooctamer of four alpha and four beta subunits. Pyruvate serves as cofactor. In terms of processing, is synthesized initially as an inactive proenzyme, which is activated by self-cleavage at a specific serine bond to produce a beta-subunit with a hydroxyl group at its C-terminus and an alpha-subunit with a pyruvoyl group at its N-terminus.

Its subcellular location is the cytoplasm. The catalysed reaction is L-aspartate + H(+) = beta-alanine + CO2. Its pathway is cofactor biosynthesis; (R)-pantothenate biosynthesis; beta-alanine from L-aspartate: step 1/1. In terms of biological role, catalyzes the pyruvoyl-dependent decarboxylation of aspartate to produce beta-alanine. This is Aspartate 1-decarboxylase from Leptospira borgpetersenii serovar Hardjo-bovis (strain JB197).